The chain runs to 209 residues: Nascent polypeptide-associated complex subunit alpha-like protein 5 (209 aa).

The disordered stretch occupies residues 23–71 (EKEDDVVVEDVKDGEEEDDDEDDEDVEVEGEGGNENAKQSRSEKKSRKA). Residues 25-54 (EDDVVVEDVKDGEEEDDDEDDEDVEVEGEG) are compositionally biased toward acidic residues. Residues 62–127 (SRSEKKSRKA…AKVDDLSSQL (66 aa)) enclose the NAC-A/B domain. In terms of domain architecture, UBA spans 170 to 207 (VEARDIDLVMTQAGVSKAKAVSALKANDGDIVSAIMEL).

Belongs to the NAC-alpha family.

In terms of biological role, may promote appropriate targeting of ribosome-nascent polypeptide complexes. The sequence is that of Nascent polypeptide-associated complex subunit alpha-like protein 5 from Arabidopsis thaliana (Mouse-ear cress).